The sequence spans 97 residues: YcgL domain-containing protein Avin_32960 (97 aa).

The region spanning 3–87 (CICSIYKSPR…PEEEYVEHLP (85 aa)) is the YcgL domain.

The polypeptide is YcgL domain-containing protein Avin_32960 (Azotobacter vinelandii (strain DJ / ATCC BAA-1303)).